We begin with the raw amino-acid sequence, 283 residues long: 2-dehydro-3-deoxyphosphooctonate aldolase (283 aa).

Belongs to the KdsA family.

The protein resides in the cytoplasm. It carries out the reaction D-arabinose 5-phosphate + phosphoenolpyruvate + H2O = 3-deoxy-alpha-D-manno-2-octulosonate-8-phosphate + phosphate. Its pathway is carbohydrate biosynthesis; 3-deoxy-D-manno-octulosonate biosynthesis; 3-deoxy-D-manno-octulosonate from D-ribulose 5-phosphate: step 2/3. The protein operates within bacterial outer membrane biogenesis; lipopolysaccharide biosynthesis. This chain is 2-dehydro-3-deoxyphosphooctonate aldolase, found in Prochlorococcus marinus (strain MIT 9313).